We begin with the raw amino-acid sequence, 126 residues long: NADH-quinone oxidoreductase subunit A (126 aa).

3 helical membrane passes run 16–36 (ILVL…AAAI), 73–93 (ILFI…VAFG), and 95–115 (MSMT…VGFA).

This sequence belongs to the complex I subunit 3 family. As to quaternary structure, NDH-1 is composed of 14 different subunits. Subunits NuoA, H, J, K, L, M, N constitute the membrane sector of the complex.

The protein resides in the cell inner membrane. The catalysed reaction is a quinone + NADH + 5 H(+)(in) = a quinol + NAD(+) + 4 H(+)(out). NDH-1 shuttles electrons from NADH, via FMN and iron-sulfur (Fe-S) centers, to quinones in the respiratory chain. The immediate electron acceptor for the enzyme in this species is believed to be ubiquinone. Couples the redox reaction to proton translocation (for every two electrons transferred, four hydrogen ions are translocated across the cytoplasmic membrane), and thus conserves the redox energy in a proton gradient. The chain is NADH-quinone oxidoreductase subunit A from Rhodobacter capsulatus (Rhodopseudomonas capsulata).